The following is a 106-amino-acid chain: Ribonuclease P protein component 4 (106 aa).

Positions 63, 66, 89, and 92 each coordinate Zn(2+).

This sequence belongs to the eukaryotic/archaeal RNase P protein component 4 family. In terms of assembly, consists of a catalytic RNA component and at least 4-5 protein subunits. It depends on Zn(2+) as a cofactor.

The protein resides in the cytoplasm. The enzyme catalyses Endonucleolytic cleavage of RNA, removing 5'-extranucleotides from tRNA precursor.. Its function is as follows. Part of ribonuclease P, a protein complex that generates mature tRNA molecules by cleaving their 5'-ends. The polypeptide is Ribonuclease P protein component 4 (Methanosphaerula palustris (strain ATCC BAA-1556 / DSM 19958 / E1-9c)).